Reading from the N-terminus, the 479-residue chain is Proline--tRNA ligase (479 aa).

Belongs to the class-II aminoacyl-tRNA synthetase family. ProS type 3 subfamily. In terms of assembly, homodimer.

It is found in the cytoplasm. The enzyme catalyses tRNA(Pro) + L-proline + ATP = L-prolyl-tRNA(Pro) + AMP + diphosphate. Functionally, catalyzes the attachment of proline to tRNA(Pro) in a two-step reaction: proline is first activated by ATP to form Pro-AMP and then transferred to the acceptor end of tRNA(Pro). This is Proline--tRNA ligase from Lachnospira eligens (strain ATCC 27750 / DSM 3376 / VPI C15-48 / C15-B4) (Eubacterium eligens).